The primary structure comprises 207 residues: Cytochrome c biogenesis ATP-binding export protein CcmA (207 aa).

The ABC transporter domain occupies 4–207 (LEARELLCER…RISLTQTRAA (204 aa)). Position 36 to 43 (36 to 43 (GSNGAGKT)) interacts with ATP.

It belongs to the ABC transporter superfamily. CcmA exporter (TC 3.A.1.107) family. The complex is composed of two ATP-binding proteins (CcmA) and two transmembrane proteins (CcmB).

The protein localises to the cell inner membrane. The enzyme catalyses heme b(in) + ATP + H2O = heme b(out) + ADP + phosphate + H(+). Its function is as follows. Part of the ABC transporter complex CcmAB involved in the biogenesis of c-type cytochromes; once thought to export heme, this seems not to be the case, but its exact role is uncertain. Responsible for energy coupling to the transport system. This chain is Cytochrome c biogenesis ATP-binding export protein CcmA, found in Shigella flexneri.